The sequence spans 154 residues: Putative F-box protein At2g11200 (154 aa).

The 47-residue stretch at 5 to 51 (TTAMSDLPRDLEEEVLSRVQLASLRAVRTTCKKWNRRLSKYRFTKKY) folds into the F-box domain.

The polypeptide is Putative F-box protein At2g11200 (Arabidopsis thaliana (Mouse-ear cress)).